The chain runs to 475 residues: Neuronal acetylcholine receptor subunit alpha-5 (475 aa).

The first 29 residues, 1–29 (MAAPGWGRWVLGLGPLLLQVFLPFQLVAG), serve as a signal peptide directing secretion. Residues 30–261 (RWGPEGAGGG…VIKRLPLFYT (232 aa)) are Extracellular-facing. A disulfide bridge connects residues Cys-177 and Cys-191. Asn-190 and Asn-236 each carry an N-linked (GlcNAc...) asparagine glycan. Cys-241 and Cys-242 are disulfide-bonded. Transmembrane regions (helical) follow at residues 262 to 282 (LFLIIPCIGLSFLTVLVFYLP), 289 to 309 (ICLCTSVLVSLTVFLLVIEEI), and 324 to 344 (LVFTMIFVTLSIMVTVFAINI). Over 345 to 437 (HHRSSSTHDA…KFIAQVLDRM (93 aa)) the chain is Cytoplasmic. The chain crosses the membrane as a helical span at residues 438 to 458 (FLWTFLLVSVVGSLGLFVPVI). Residues 459–475 (YKWANIIVPIHIGNENK) are Extracellular-facing.

This sequence belongs to the ligand-gated ion channel (TC 1.A.9) family. Acetylcholine receptor (TC 1.A.9.1) subfamily. Alpha-5/CHRNA5 sub-subfamily. In terms of assembly, neuronal AChR that forms heteropentamers composed of two different type of subunits: alpha and non-alpha (beta). CHRNA5/alpha-5 subunit is only able to form functional nAChRs when co-assembled with another alpha subunit, can be combined to CHRNA4/alpha-4 or CHRNA3/alpha-3 and CHRNB4/beta-4 or CHRNB2/beta-2 to give rise to functional receptors. Interacts with LYPD6.

Its subcellular location is the synaptic cell membrane. The protein resides in the cell membrane. The enzyme catalyses Ca(2+)(in) = Ca(2+)(out). It carries out the reaction K(+)(in) = K(+)(out). It catalyses the reaction Na(+)(in) = Na(+)(out). Activated by a myriad of ligands such as acetylcholine, cytisine, nicotine, choline and epibatidine. In terms of biological role, component of neuronal acetylcholine receptors (nAChRs) that function as pentameric, ligand-gated cation channels with high calcium permeability among other activities. nAChRs are excitatory neurotrasnmitter receptors formed by a collection of nAChR subunits known to mediate synaptic transmission in the nervous system and the neuromuscular junction. Each nAchR subunit confers differential attributes to channel properties, including activation, deactivation and desensitization kinetics, pH sensitivity, cation permeability, and binding to allosteric modulators. Has an accessory rather than functional role and is only able to form functional nAChRs when co-assembled with another beta subunit. Participates in pentameric assemblies along with CHRNA3, CHRNA4, CHRNB2 and CHRNB4. Increases receptor sensitivity to acetylcholine and nicotine when associated with CHRNA4 and CHRNB2. Plays a role in nicotine addiction. The chain is Neuronal acetylcholine receptor subunit alpha-5 (CHRNA5) from Bos taurus (Bovine).